Consider the following 498-residue polypeptide: Probable malate:quinone oxidoreductase (498 aa).

It belongs to the MQO family. Requires FAD as cofactor.

The enzyme catalyses (S)-malate + a quinone = a quinol + oxaloacetate. The protein operates within carbohydrate metabolism; tricarboxylic acid cycle; oxaloacetate from (S)-malate (quinone route): step 1/1. The sequence is that of Probable malate:quinone oxidoreductase from Prochlorococcus marinus (strain MIT 9301).